The following is a 165-amino-acid chain: Nascent polypeptide-associated complex subunit alpha (165 aa).

The region spanning 14–78 (NRNEKKAREL…AKVDNFTQRL (65 aa)) is the NAC-A/B domain. Positions 126-165 (LSNDDIDLVVQQTNATKGQAIKALKEHNGDIVNAIMSLSK) constitute a UBA domain.

This sequence belongs to the NAC-alpha family. Part of the nascent polypeptide-associated complex (NAC), consisting of EGD2 and EGD1. NAC associates with ribosomes via EGD1.

It is found in the cytoplasm. It localises to the nucleus. Component of the nascent polypeptide-associated complex (NAC), a dynamic component of the ribosomal exit tunnel, protecting the emerging polypeptides from interaction with other cytoplasmic proteins to ensure appropriate nascent protein targeting. The NAC complex also promotes mitochondrial protein import by enhancing productive ribosome interactions with the outer mitochondrial membrane and blocks the inappropriate interaction of ribosomes translating non-secretory nascent polypeptides with translocation sites in the membrane of the endoplasmic reticulum. EGD2 may also be involved in transcription regulation. The sequence is that of Nascent polypeptide-associated complex subunit alpha (EGD2) from Candida glabrata (strain ATCC 2001 / BCRC 20586 / JCM 3761 / NBRC 0622 / NRRL Y-65 / CBS 138) (Yeast).